The chain runs to 207 residues: Large ribosomal subunit protein uL4 (207 aa).

The interval 53 to 76 is disordered; that stretch reads NRSAVRGGGRKPWRQKGTGRARQG. Residues 60–71 show a composition bias toward basic residues; it reads GGRKPWRQKGTG.

The protein belongs to the universal ribosomal protein uL4 family. As to quaternary structure, part of the 50S ribosomal subunit.

One of the primary rRNA binding proteins, this protein initially binds near the 5'-end of the 23S rRNA. It is important during the early stages of 50S assembly. It makes multiple contacts with different domains of the 23S rRNA in the assembled 50S subunit and ribosome. Its function is as follows. Forms part of the polypeptide exit tunnel. The chain is Large ribosomal subunit protein uL4 from Staphylococcus saprophyticus subsp. saprophyticus (strain ATCC 15305 / DSM 20229 / NCIMB 8711 / NCTC 7292 / S-41).